The following is a 423-amino-acid chain: Serpin B12 (423 aa).

Residues 63–72 (LSKDEHKEPN) are compositionally biased toward basic and acidic residues. Residues 63 to 106 (LSKDEHKEPNDPSPQSESKASDSSLEGQKQTSASQDQQGESTND) form a disordered region. Positions 75 to 106 (SPQSESKASDSSLEGQKQTSASQDQQGESTND) are enriched in polar residues.

This sequence belongs to the serpin family. Ov-serpin subfamily. Interacts with SLFN12; as part of a pathway regulating cell differentiation.

The protein localises to the cytoplasm. Inhibits trypsin and plasmin, but not thrombin, coagulation factor Xa, or urokinase-type plasminogen activator. May play a role in cell differentiation. In Mus musculus (Mouse), this protein is Serpin B12 (Serpinb12).